A 358-amino-acid polypeptide reads, in one-letter code: Protein Wnt-8 (358 aa).

The N-terminal stretch at 1–22 is a signal peptide; sequence MQNTTLFILATLLIFCPFFTAS. An intrachain disulfide couples Cys-55 to Cys-66. Asn-104 carries an N-linked (GlcNAc...) asparagine glycan. 10 disulfides stabilise this stretch: Cys-105/Cys-113, Cys-115/Cys-133, Cys-181/Cys-195, Cys-183/Cys-190, Cys-260/Cys-298, Cys-276/Cys-291, Cys-295/Cys-337, Cys-313/Cys-328, Cys-315/Cys-325, and Cys-320/Cys-321. Residue Ser-187 is the site of O-palmitoleoyl serine attachment. N-linked (GlcNAc...) asparagine glycosylation is found at Asn-263 and Asn-282.

Belongs to the Wnt family. As to quaternary structure, homooligomer; disulfide-linked, leading to inactivation. Interacts with the long chain of cer1. In terms of processing, palmitoleoylation is required for efficient binding to frizzled receptors. Depalmitoleoylation leads to Wnt signaling pathway inhibition. Proteolytic processing by tiki1 and tiki2 promotes oxidation and formation of large disulfide-bond oligomers, leading to inactivation of wnt8.

It is found in the secreted. It localises to the extracellular space. Its subcellular location is the extracellular matrix. Ligand for members of the frizzled family of seven transmembrane receptors. Plays a role in ventral mesodermal patterning during embryogenesis. Mimics Nieuwkoop center activity. Causes dorsal mesodermal differentiation of animal cap ectoderm when coexpressed with noggin and nuclear, sequence-specific DNA-binding protein xBra. None of these molecules causes dorsal mesoderm formation when expressed alone. This Xenopus laevis (African clawed frog) protein is Protein Wnt-8 (wnt8).